Consider the following 303-residue polypeptide: Cytosolic Fe-S cluster assembly factor CFD1 (303 aa).

15-22 (GKGGVGKS) provides a ligand contact to ATP. [4Fe-4S] cluster-binding residues include Cys199 and Cys202.

The protein belongs to the Mrp/NBP35 ATP-binding proteins family. NUBP2/CFD1 subfamily. In terms of assembly, heterotetramer of 2 NBP35 and 2 CFD1 chains. It depends on [4Fe-4S] cluster as a cofactor.

Its subcellular location is the cytoplasm. Component of the cytosolic iron-sulfur (Fe/S) protein assembly (CIA) machinery. Required for maturation of extramitochondrial Fe-S proteins. The NBP35-CFD1 heterotetramer forms a Fe-S scaffold complex, mediating the de novo assembly of an Fe-S cluster and its transfer to target apoproteins. The polypeptide is Cytosolic Fe-S cluster assembly factor CFD1 (Chaetomium globosum (strain ATCC 6205 / CBS 148.51 / DSM 1962 / NBRC 6347 / NRRL 1970) (Soil fungus)).